We begin with the raw amino-acid sequence, 154 residues long: Large ribosomal subunit protein uL13 (154 aa).

The protein belongs to the universal ribosomal protein uL13 family. In terms of assembly, part of the 50S ribosomal subunit.

Its function is as follows. This protein is one of the early assembly proteins of the 50S ribosomal subunit, although it is not seen to bind rRNA by itself. It is important during the early stages of 50S assembly. The polypeptide is Large ribosomal subunit protein uL13 (Rhodopseudomonas palustris (strain ATCC BAA-98 / CGA009)).